A 678-amino-acid polypeptide reads, in one-letter code: Glycine--tRNA ligase beta subunit (678 aa).

Belongs to the class-II aminoacyl-tRNA synthetase family. In terms of assembly, tetramer of two alpha and two beta subunits.

It is found in the cytoplasm. It catalyses the reaction tRNA(Gly) + glycine + ATP = glycyl-tRNA(Gly) + AMP + diphosphate. This is Glycine--tRNA ligase beta subunit from Streptococcus pneumoniae (strain 70585).